The sequence spans 441 residues: Serine carboxypeptidase-like 1 (441 aa).

Positions 1–29 are cleaved as a signal peptide; it reads MANKYVSSVLKSLLVLLHLVFLSKQHVDS. Intrachain disulfides connect Cys-88-Cys-331, Cys-252-Cys-266, and Cys-290-Cys-297. Asn-109 carries N-linked (GlcNAc...) asparagine glycosylation. Ser-184 is a catalytic residue. Asn-350 carries an N-linked (GlcNAc...) asparagine glycan. Asp-366 is an active-site residue. The N-linked (GlcNAc...) asparagine glycan is linked to Asn-382. Residue His-419 is part of the active site.

The protein belongs to the peptidase S10 family. Expressed in seedlings and roots.

The protein localises to the secreted. In terms of biological role, probable carboxypeptidase. In Arabidopsis thaliana (Mouse-ear cress), this protein is Serine carboxypeptidase-like 1 (SCPL1).